Reading from the N-terminus, the 462-residue chain is MADGEEPEKKRRRIEELLAEKMAVDGGCGDTGDWEGRWNHVKKFLERSGPFTHPDFEPSTESLQFLLDTCKVLVIGAGGLGCELLKNLALSGFRQIHVIDMDTIDVSNLNRQFLFRPKDVGRPKAEVAAEFLNDRVPNCNVVPHFNKIQDFNDTFYRQFHIIVCGLDSIIARRWINGMLISLLNYEDGVLDPSSIVPLIDGGTEGFKGNARVILPGMTACIECTLELYPPQVNFPMCTIASMPRLPEHCIEYVRMLQWPKEQPFGDGVPLDGDDPEHIQWIFQKSVERASQYNIRGVTYRLTQGVVKRIIPAVASTNAVIAAVCATEVFKIATSAYIPLNNYLVFNDVDGLYTYTFEAERKENCPACSQLPQNIQFSPSAKLQEVLDYLTNSASLQMKSPAITATLEGKNRTLYLQSVTSIEERTRPNLSKTLKELGLVDGQELAVADVTTPQTVLFKLHFT.

Alanine 2 is modified (N-acetylalanine). Residues 53-70 are interaction with UBE2M N-terminus; that stretch reads HPDFEPSTESLQFLLDTC. Residues 100 to 124 and 148 to 171 contribute to the ATP site; these read DMDTIDVSNLNRQFLFRPKDVGRPK and IQDFNDTFYRQFHIIVCGLDSIIA. Interaction with UBE2M N-terminus stretches follow at residues 157 to 161 and 192 to 217; these read RQFHI and PSSIVPLIDGGTEGFKGNARVILPGM. The interaction with NEDD8 stretch occupies residues 227–229; sequence LYP. Cysteine 237 acts as the Glycyl thioester intermediate in catalysis. Interaction with NAE1 regions lie at residues 242–248 and 292–295; these read MPRLPEH and YNIR. An interaction with UBE2M N-terminus region spans residues 331-338; the sequence is IATSAYIP. The interaction with NEDD8 stretch occupies residues 352-357; it reads YTYTFE. The tract at residues 368–462 is interaction with UBE2M core domain; it reads SQLPQNIQFS…QTVLFKLHFT (95 aa).

Belongs to the ubiquitin-activating E1 family. UBA3 subfamily. As to quaternary structure, heterodimer of UBA3 and NAE1. Interacts with NEDD8, UBE2F and UBE2M. Binds ESR1 and ESR2 with bound steroid ligand. Interacts with TBATA. As to expression, ubiquitously expressed.

It carries out the reaction ATP + [NEDD8 protein] + [E1 NEDD8-activating enzyme]-L-cysteine = AMP + diphosphate + [E1 NEDD8-activating enzyme]-S-[NEDD8 protein]-yl-L-cysteine.. It participates in protein modification; protein neddylation. Its activity is regulated as follows. Binding of TP53BP2 to the regulatory subunit NAE1 decreases activity. In terms of biological role, catalytic subunit of the dimeric UBA3-NAE1 E1 enzyme. E1 activates NEDD8 by first adenylating its C-terminal glycine residue with ATP, thereafter linking this residue to the side chain of the catalytic cysteine, yielding a NEDD8-UBA3 thioester and free AMP. E1 finally transfers NEDD8 to the catalytic cysteine of UBE2M. Down-regulates steroid receptor activity. Necessary for cell cycle progression. In Rattus norvegicus (Rat), this protein is NEDD8-activating enzyme E1 catalytic subunit (Uba3).